The chain runs to 235 residues: Glycerol-3-phosphate acyltransferase (235 aa).

A run of 6 helical transmembrane segments spans residues 4 to 24 (LLAILAVSYLIGSIPTGIMAG), 56 to 76 (TVTLIDIIKGVVAAVSVVAFF), 94 to 114 (LLAGMSAVVGHVFTVFAGFKG), 124 to 144 (MLIGIAPVSMLMVIGIFLLTI), 152 to 172 (VASMLAAVAFPLIIAIRKYIF), and 191 to 211 (FHDSLDYHLMIFGLIVALGIL).

The protein belongs to the PlsY family. Probably interacts with PlsX.

It is found in the cell inner membrane. It catalyses the reaction an acyl phosphate + sn-glycerol 3-phosphate = a 1-acyl-sn-glycero-3-phosphate + phosphate. The protein operates within lipid metabolism; phospholipid metabolism. Functionally, catalyzes the transfer of an acyl group from acyl-phosphate (acyl-PO(4)) to glycerol-3-phosphate (G3P) to form lysophosphatidic acid (LPA). This enzyme utilizes acyl-phosphate as fatty acyl donor, but not acyl-CoA or acyl-ACP. The sequence is that of Glycerol-3-phosphate acyltransferase from Chlorobium limicola (strain DSM 245 / NBRC 103803 / 6330).